A 185-amino-acid polypeptide reads, in one-letter code: MDIDPYKEFGATVELLSFLPSDFFPSVRDLXDTASALYREALESPEHCSPHHTALRQAILCWGKLMTLATWVGNNLEDPASRDLVVNYVNTNMGLKIRQLLWFHISCLTFGRETVLEYLVSFGVWIRTPPAYRPPNAPILSTLPETTVVRRRDRGRSPRRRTPSPRRRRSQSPRRRRSQSRESQC.

Residues 136–185 (NAPILSTLPETTVVRRRDRGRSPRRRTPSPRRRRSQSPRRRRSQSRESQC) are disordered. Basic residues predominate over residues 149–178 (VRRRDRGRSPRRRTPSPRRRRSQSPRRRRS). S157, S164, and S172 each carry phosphoserine; by host. The 1; half-length repeat unit spans residues 157–163 (SPRRRTP). The tract at residues 157–179 (SPRRRTPSPRRRRSQSPRRRRSQ) is 3 X 8 AA repeats of S-P-R-R-R-[PR]-S-Q. The Bipartite nuclear localization signal signature appears at 160–177 (RRTPSPRRRRSQSPRRRR). 2 tandem repeats follow at residues 164 to 171 (SPRRRRSQ) and 172 to 179 (SPRRRRSQ). The segment at 179–185 (QSRESQC) is RNA binding.

The protein belongs to the orthohepadnavirus core antigen family. In terms of assembly, homodimerizes, then multimerizes. Interacts with cytosol exposed regions of viral L glycoprotein present in the reticulum-to-Golgi compartment. Interacts with human FLNB. Phosphorylated form interacts with host importin alpha; this interaction depends on the exposure of the NLS, which itself depends upon genome maturation and/or phosphorylation of the capsid protein. Interacts with host NUP153. Phosphorylated by host SRPK1, SRPK2, and maybe protein kinase C or GAPDH. Phosphorylation is critical for pregenomic RNA packaging. Protein kinase C phosphorylation is stimulated by HBx protein and may play a role in transport of the viral genome to the nucleus at the late step during the viral replication cycle.

The protein localises to the virion. Its subcellular location is the host cytoplasm. Its function is as follows. Self assembles to form an icosahedral capsid. Most capsids appear to be large particles with an icosahedral symmetry of T=4 and consist of 240 copies of capsid protein, though a fraction forms smaller T=3 particles consisting of 180 capsid proteins. Entering capsids are transported along microtubules to the nucleus. Phosphorylation of the capsid is thought to induce exposure of nuclear localization signal in the C-terminal portion of the capsid protein that allows binding to the nuclear pore complex via the importin (karyopherin-) alpha and beta. Capsids are imported in intact form through the nuclear pore into the nuclear basket, where it probably binds NUP153. Only capsids that contain the mature viral genome can release the viral DNA and capsid protein into the nucleoplasm. Immature capsids get stuck in the basket. Capsids encapsulate the pre-genomic RNA and the P protein. Pre-genomic RNA is reverse-transcribed into DNA while the capsid is still in the cytoplasm. The capsid can then either be directed to the nucleus, providing more genomes for transcription, or bud through the endoplasmic reticulum to provide new virions. The sequence is that of Capsid protein from Hepatitis B virus genotype A1 subtype adw (isolate Philippines/pFDW294/1988) (HBV-A).